A 1059-amino-acid chain; its full sequence is Isoleucine--tRNA ligase (1059 aa).

The short motif at 59 to 69 is the 'HIGH' region element; sequence PFANGLPHYGH. Residues 637–641 carry the 'KMSKS' region motif; it reads KMSKS. Position 640 (Lys640) interacts with ATP.

It belongs to the class-I aminoacyl-tRNA synthetase family. IleS type 2 subfamily. As to quaternary structure, monomer. Zn(2+) serves as cofactor.

Its subcellular location is the cytoplasm. It carries out the reaction tRNA(Ile) + L-isoleucine + ATP = L-isoleucyl-tRNA(Ile) + AMP + diphosphate. Catalyzes the attachment of isoleucine to tRNA(Ile). As IleRS can inadvertently accommodate and process structurally similar amino acids such as valine, to avoid such errors it has two additional distinct tRNA(Ile)-dependent editing activities. One activity is designated as 'pretransfer' editing and involves the hydrolysis of activated Val-AMP. The other activity is designated 'posttransfer' editing and involves deacylation of mischarged Val-tRNA(Ile). The protein is Isoleucine--tRNA ligase of Mycobacterium leprae (strain TN).